Here is a 333-residue protein sequence, read N- to C-terminus: Ketol-acid reductoisomerase (NADP(+)) (333 aa).

The KARI N-terminal Rossmann domain occupies 2–182 (AKIYYDEDAS…GATRAGVIET (181 aa)). NADP(+)-binding positions include 25 to 28 (YGSQ), Ser51, Ser53, and 83 to 86 (DTVQ). His108 is a catalytic residue. NADP(+) is bound at residue Gly134. The KARI C-terminal knotted domain maps to 183–327 (TFKEETETDL…EELRKMMPWL (145 aa)). Residues Asp191, Glu195, Glu227, and Glu231 each contribute to the Mg(2+) site. Substrate is bound at residue Ser252.

The protein belongs to the ketol-acid reductoisomerase family. The cofactor is Mg(2+).

It catalyses the reaction (2R)-2,3-dihydroxy-3-methylbutanoate + NADP(+) = (2S)-2-acetolactate + NADPH + H(+). The enzyme catalyses (2R,3R)-2,3-dihydroxy-3-methylpentanoate + NADP(+) = (S)-2-ethyl-2-hydroxy-3-oxobutanoate + NADPH + H(+). The protein operates within amino-acid biosynthesis; L-isoleucine biosynthesis; L-isoleucine from 2-oxobutanoate: step 2/4. It participates in amino-acid biosynthesis; L-valine biosynthesis; L-valine from pyruvate: step 2/4. Involved in the biosynthesis of branched-chain amino acids (BCAA). Catalyzes an alkyl-migration followed by a ketol-acid reduction of (S)-2-acetolactate (S2AL) to yield (R)-2,3-dihydroxy-isovalerate. In the isomerase reaction, S2AL is rearranged via a Mg-dependent methyl migration to produce 3-hydroxy-3-methyl-2-ketobutyrate (HMKB). In the reductase reaction, this 2-ketoacid undergoes a metal-dependent reduction by NADPH to yield (R)-2,3-dihydroxy-isovalerate. The sequence is that of Ketol-acid reductoisomerase (NADP(+)) from Aquifex aeolicus (strain VF5).